The following is a 239-amino-acid chain: Ribosomal RNA small subunit methyltransferase G (239 aa).

S-adenosyl-L-methionine contacts are provided by residues Gly-78, Phe-83, 129-130 (AE), and Arg-148.

The protein belongs to the methyltransferase superfamily. RNA methyltransferase RsmG family.

It localises to the cytoplasm. Specifically methylates the N7 position of a guanine in 16S rRNA. This Alkaliphilus metalliredigens (strain QYMF) protein is Ribosomal RNA small subunit methyltransferase G.